Consider the following 428-residue polypeptide: 3-phosphoshikimate 1-carboxyvinyltransferase (428 aa).

The 3-phosphoshikimate site is built by K22, S23, and R27. Position 22 (K22) interacts with phosphoenolpyruvate. Residues G96 and R124 each contribute to the phosphoenolpyruvate site. 3-phosphoshikimate contacts are provided by S171, S172, Q173, S198, D311, and K338. A phosphoenolpyruvate-binding site is contributed by Q173. D311 functions as the Proton acceptor in the catalytic mechanism. Phosphoenolpyruvate contacts are provided by R342 and R383.

It belongs to the EPSP synthase family. In terms of assembly, monomer.

The protein resides in the cytoplasm. It carries out the reaction 3-phosphoshikimate + phosphoenolpyruvate = 5-O-(1-carboxyvinyl)-3-phosphoshikimate + phosphate. It functions in the pathway metabolic intermediate biosynthesis; chorismate biosynthesis. In terms of biological role, catalyzes the transfer of the enolpyruvyl moiety of phosphoenolpyruvate (PEP) to the 5-hydroxyl of shikimate-3-phosphate (S3P) to produce enolpyruvyl shikimate-3-phosphate and inorganic phosphate. The sequence is that of 3-phosphoshikimate 1-carboxyvinyltransferase from Methanopyrus kandleri (strain AV19 / DSM 6324 / JCM 9639 / NBRC 100938).